The chain runs to 278 residues: DNA repair protein RecO (278 aa).

A compositionally biased stretch (polar residues) spans 1-12; the sequence is MGTNDALTSTED. The segment at 1–41 is disordered; the sequence is MGTNDALTSTEDAVTAGANDAPLPAPPEPPRKARRATSRTS.

It belongs to the RecO family.

Its function is as follows. Involved in DNA repair and RecF pathway recombination. The polypeptide is DNA repair protein RecO (Burkholderia orbicola (strain AU 1054)).